Reading from the N-terminus, the 56-residue chain is Large ribosomal subunit protein bL33 (56 aa).

The protein belongs to the bacterial ribosomal protein bL33 family.

In Vibrio campbellii (strain ATCC BAA-1116), this protein is Large ribosomal subunit protein bL33.